The primary structure comprises 380 residues: Cytochrome b (380 aa).

4 helical membrane-spanning segments follow: residues 34-54 (FGSL…LLAM), 78-99 (WLIR…YFHI), 114-134 (WNTG…GYVL), and 179-199 (FFAL…IHLT). Heme b is bound by residues His84 and His98. The heme b site is built by His183 and His197. His202 provides a ligand contact to a ubiquinone. The next 4 helical transmembrane spans lie at 227–247 (TKDI…ALFS), 289–309 (LGGV…PLLH), 321–341 (LSQL…WIGS), and 348–368 (FIII…ILFP).

This sequence belongs to the cytochrome b family. As to quaternary structure, the cytochrome bc1 complex contains 11 subunits: 3 respiratory subunits (MT-CYB, CYC1 and UQCRFS1), 2 core proteins (UQCRC1 and UQCRC2) and 6 low-molecular weight proteins (UQCRH/QCR6, UQCRB/QCR7, UQCRQ/QCR8, UQCR10/QCR9, UQCR11/QCR10 and a cleavage product of UQCRFS1). This cytochrome bc1 complex then forms a dimer. Heme b serves as cofactor.

The protein resides in the mitochondrion inner membrane. Functionally, component of the ubiquinol-cytochrome c reductase complex (complex III or cytochrome b-c1 complex) that is part of the mitochondrial respiratory chain. The b-c1 complex mediates electron transfer from ubiquinol to cytochrome c. Contributes to the generation of a proton gradient across the mitochondrial membrane that is then used for ATP synthesis. This is Cytochrome b (MT-CYB) from Pygoscelis papua (Gentoo penguin).